The following is a 302-amino-acid chain: Nucleotide-binding protein SE_0548 (302 aa).

Residue 18–25 (GMSGAGKS) participates in ATP binding. 69–72 (DLRG) contacts GTP.

It belongs to the RapZ-like family.

Displays ATPase and GTPase activities. The sequence is that of Nucleotide-binding protein SE_0548 from Staphylococcus epidermidis (strain ATCC 12228 / FDA PCI 1200).